Here is a 786-residue protein sequence, read N- to C-terminus: LPS-assembly protein LptD (786 aa).

An N-terminal signal peptide occupies residues methionine 1–alanine 24.

The protein belongs to the LptD family. Component of the lipopolysaccharide transport and assembly complex. Interacts with LptE and LptA.

The protein resides in the cell outer membrane. Together with LptE, is involved in the assembly of lipopolysaccharide (LPS) at the surface of the outer membrane. The polypeptide is LPS-assembly protein LptD (Aliivibrio fischeri (strain ATCC 700601 / ES114) (Vibrio fischeri)).